Reading from the N-terminus, the 194-residue chain is Peptidyl-tRNA hydrolase (194 aa).

Residue tyrosine 17 participates in tRNA binding. Histidine 22 serves as the catalytic Proton acceptor. 3 residues coordinate tRNA: tyrosine 68, asparagine 70, and asparagine 116.

It belongs to the PTH family. Monomer.

It is found in the cytoplasm. The enzyme catalyses an N-acyl-L-alpha-aminoacyl-tRNA + H2O = an N-acyl-L-amino acid + a tRNA + H(+). Its function is as follows. Hydrolyzes ribosome-free peptidyl-tRNAs (with 1 or more amino acids incorporated), which drop off the ribosome during protein synthesis, or as a result of ribosome stalling. In terms of biological role, catalyzes the release of premature peptidyl moieties from peptidyl-tRNA molecules trapped in stalled 50S ribosomal subunits, and thus maintains levels of free tRNAs and 50S ribosomes. The protein is Peptidyl-tRNA hydrolase of Pseudomonas fluorescens (strain SBW25).